Reading from the N-terminus, the 431-residue chain is Enolase (431 aa).

Glutamine 167 contacts (2R)-2-phosphoglycerate. Residue glutamate 209 is the Proton donor of the active site. 3 residues coordinate Mg(2+): aspartate 246, glutamate 289, and aspartate 316. Lysine 341, arginine 370, serine 371, and lysine 392 together coordinate (2R)-2-phosphoglycerate. Lysine 341 serves as the catalytic Proton acceptor.

This sequence belongs to the enolase family. As to quaternary structure, component of the RNA degradosome, a multiprotein complex involved in RNA processing and mRNA degradation. It depends on Mg(2+) as a cofactor.

Its subcellular location is the cytoplasm. The protein localises to the secreted. It is found in the cell surface. The enzyme catalyses (2R)-2-phosphoglycerate = phosphoenolpyruvate + H2O. Its pathway is carbohydrate degradation; glycolysis; pyruvate from D-glyceraldehyde 3-phosphate: step 4/5. Catalyzes the reversible conversion of 2-phosphoglycerate (2-PG) into phosphoenolpyruvate (PEP). It is essential for the degradation of carbohydrates via glycolysis. In Chromohalobacter salexigens (strain ATCC BAA-138 / DSM 3043 / CIP 106854 / NCIMB 13768 / 1H11), this protein is Enolase.